The following is a 372-amino-acid chain: DNA replication and repair protein RecF (372 aa).

An ATP-binding site is contributed by 30–37 (GENAQGKT).

It belongs to the RecF family.

The protein resides in the cytoplasm. Its function is as follows. The RecF protein is involved in DNA metabolism; it is required for DNA replication and normal SOS inducibility. RecF binds preferentially to single-stranded, linear DNA. It also seems to bind ATP. This is DNA replication and repair protein RecF from Geobacillus kaustophilus (strain HTA426).